Consider the following 482-residue polypeptide: Ribulose bisphosphate carboxylase large chain (482 aa).

A propeptide spanning residues 1 to 2 (MS) is cleaved from the precursor. Position 3 is an N-acetylproline (Pro3). Lys14 carries the N6,N6,N6-trimethyllysine modification. 2 residues coordinate substrate: Asn123 and Thr173. The Proton acceptor role is filled by Lys175. Substrate is bound at residue Lys177. Residues Lys201, Asp203, and Glu204 each contribute to the Mg(2+) site. Lys201 is subject to N6-carboxylysine. The Proton acceptor role is filled by His294. Arg295, His327, and Ser379 together coordinate substrate.

This sequence belongs to the RuBisCO large chain family. Type I subfamily. Heterohexadecamer of 8 large chains and 8 small chains; disulfide-linked. The disulfide link is formed within the large subunit homodimers. The cofactor is Mg(2+). The disulfide bond which can form in the large chain dimeric partners within the hexadecamer appears to be associated with oxidative stress and protein turnover.

The protein resides in the plastid. The protein localises to the chloroplast. The catalysed reaction is 2 (2R)-3-phosphoglycerate + 2 H(+) = D-ribulose 1,5-bisphosphate + CO2 + H2O. It catalyses the reaction D-ribulose 1,5-bisphosphate + O2 = 2-phosphoglycolate + (2R)-3-phosphoglycerate + 2 H(+). RuBisCO catalyzes two reactions: the carboxylation of D-ribulose 1,5-bisphosphate, the primary event in carbon dioxide fixation, as well as the oxidative fragmentation of the pentose substrate in the photorespiration process. Both reactions occur simultaneously and in competition at the same active site. The protein is Ribulose bisphosphate carboxylase large chain of Phytolacca americana (American pokeweed).